The primary structure comprises 284 residues: Ribosomal RNA small subunit methyltransferase A (284 aa).

Residues H12, L14, G47, E68, D93, and N118 each coordinate S-adenosyl-L-methionine.

The protein belongs to the class I-like SAM-binding methyltransferase superfamily. rRNA adenine N(6)-methyltransferase family. RsmA subfamily.

The protein localises to the cytoplasm. It carries out the reaction adenosine(1518)/adenosine(1519) in 16S rRNA + 4 S-adenosyl-L-methionine = N(6)-dimethyladenosine(1518)/N(6)-dimethyladenosine(1519) in 16S rRNA + 4 S-adenosyl-L-homocysteine + 4 H(+). Its function is as follows. Specifically dimethylates two adjacent adenosines (A1518 and A1519) in the loop of a conserved hairpin near the 3'-end of 16S rRNA in the 30S particle. May play a critical role in biogenesis of 30S subunits. In Synechocystis sp. (strain ATCC 27184 / PCC 6803 / Kazusa), this protein is Ribosomal RNA small subunit methyltransferase A.